Consider the following 139-residue polypeptide: Hydrogenase maturation factor HypA (139 aa).

Ni(2+)-binding residues include M1 and H2. Residues C73 and C76 each contribute to the Zn(2+) site. Residue H98 participates in Ni(2+) binding. Zn(2+) is bound by residues C110 and C113.

It belongs to the HypA/HybF family. In terms of assembly, monomer and homodimer. Could also form hexamers. Forms a complex with HypB.

In terms of biological role, involved in the maturation of [NiFe] hydrogenases. Required for nickel insertion into the metal center of the hydrogenase. The protein is Hydrogenase maturation factor HypA of Thermococcus kodakarensis (strain ATCC BAA-918 / JCM 12380 / KOD1) (Pyrococcus kodakaraensis (strain KOD1)).